Reading from the N-terminus, the 393-residue chain is uncharacterized protein (393 aa).

[4Fe-4S] cluster-binding residues include C72, C82, C85, and C160. S-adenosyl-L-methionine is bound by residues Q215, F245, E267, and D313. The Nucleophile role is filled by C340.

It belongs to the class I-like SAM-binding methyltransferase superfamily. RNA M5U methyltransferase family.

This is an uncharacterized protein from Nitrosomonas europaea (strain ATCC 19718 / CIP 103999 / KCTC 2705 / NBRC 14298).